Consider the following 450-residue polypeptide: Tubulin beta-6 chain (450 aa).

The GTP site is built by Q11, E71, S140, G144, T145, G146, N206, and N228. A Mg(2+)-binding site is contributed by E71. The interval 429-450 is disordered; the sequence is DATVEDEEEYEGEEGLDENYET. The segment covering 431–450 has biased composition (acidic residues); the sequence is TVEDEEEYEGEEGLDENYET.

It belongs to the tubulin family. Dimer of alpha and beta chains. A typical microtubule is a hollow water-filled tube with an outer diameter of 25 nm and an inner diameter of 15 nM. Alpha-beta heterodimers associate head-to-tail to form protofilaments running lengthwise along the microtubule wall with the beta-tubulin subunit facing the microtubule plus end conferring a structural polarity. Microtubules usually have 13 protofilaments but different protofilament numbers can be found in some organisms and specialized cells. Mg(2+) serves as cofactor.

It localises to the cytoplasm. The protein localises to the cytoskeleton. In terms of biological role, tubulin is the major constituent of microtubules, a cylinder consisting of laterally associated linear protofilaments composed of alpha- and beta-tubulin heterodimers. Microtubules grow by the addition of GTP-tubulin dimers to the microtubule end, where a stabilizing cap forms. Below the cap, tubulin dimers are in GDP-bound state, owing to GTPase activity of alpha-tubulin. This chain is Tubulin beta-6 chain, found in Gossypium hirsutum (Upland cotton).